A 208-amino-acid polypeptide reads, in one-letter code: Large ribosomal subunit protein bL25 (208 aa).

It belongs to the bacterial ribosomal protein bL25 family. CTC subfamily. In terms of assembly, part of the 50S ribosomal subunit; part of the 5S rRNA/L5/L18/L25 subcomplex. Contacts the 5S rRNA. Binds to the 5S rRNA independently of L5 and L18.

In terms of biological role, this is one of the proteins that binds to the 5S RNA in the ribosome where it forms part of the central protuberance. This is Large ribosomal subunit protein bL25 from Phenylobacterium zucineum (strain HLK1).